We begin with the raw amino-acid sequence, 291 residues long: Lys-63-specific deubiquitinase BRCC36 (291 aa).

Position 2 is an N-acetylalanine (Ala-2). Residues 12–179 form the MPN domain; sequence VHLESDAFLV…YTCFQSVQAQ (168 aa). Zn(2+)-binding residues include His-122, His-124, and Asp-135. A JAMM motif motif is present at residues 122-135; the sequence is HSHPHITVWPSHVD. Ser-233 carries the post-translational modification Phosphoserine.

This sequence belongs to the peptidase M67A family. BRCC36 subfamily. As to quaternary structure, component of the ARISC complex, at least composed of UIMC1/RAP80, ABRAXAS1, BRCC3/BRCC36, BABAM2 and BABAM1/NBA1. Component of the BRCA1-A complex, at least composed of BRCA1, BARD1, UIMC1/RAP80, ABRAXAS1, BRCC3/BRCC36, BABAM2 and BABAM1/NBA1. In the BRCA1-A complex, interacts directly with ABRAXAS1 and BABAM2. Component of the BRISC complex, at least composed of ABRAXAS2, BRCC3/BRCC36, BABAM2 and BABAM1/NBA1. Identified in a complex with SHMT2 and the other subunits of the BRISC complex. In the BRISC complex, interacts directly with ABRAXAS2. Identified in a complex with ABRAXAS2 and NUMA1. The BRISC complex interacts with the CSN complex. Component of the BRCA1/BRCA2 containing complex (BRCC), which also contains BRCA1, BRCA2, BARD1, BABAM2 and RAD51. BRCC is a ubiquitin E3 ligase complex that enhances cellular survival following DNA damage. Interacts with BRCA1. Binds polyubiquitin. Interacts with PWWP2B. Interacts with HDAC1; this interaction is enhanced in the presence of PWWP2B. Requires Zn(2+) as cofactor.

It is found in the nucleus. The protein localises to the cytoplasm. Its subcellular location is the cytoskeleton. It localises to the spindle pole. Its function is as follows. Metalloprotease that specifically cleaves 'Lys-63'-linked polyubiquitin chains. Does not have activity toward 'Lys-48'-linked polyubiquitin chains. Component of the BRCA1-A complex, a complex that specifically recognizes 'Lys-63'-linked ubiquitinated histones H2A and H2AX at DNA lesions sites, leading to target the BRCA1-BARD1 heterodimer to sites of DNA damage at double-strand breaks (DSBs). In the BRCA1-A complex, it specifically removes 'Lys-63'-linked ubiquitin on histones H2A and H2AX, antagonizing the RNF8-dependent ubiquitination at double-strand breaks (DSBs). Catalytic subunit of the BRISC complex, a multiprotein complex that specifically cleaves 'Lys-63'-linked ubiquitin in various substrates. Mediates the specific 'Lys-63'-specific deubiquitination associated with the COP9 signalosome complex (CSN), via the interaction of the BRISC complex with the CSN complex. The BRISC complex is required for normal mitotic spindle assembly and microtubule attachment to kinetochores via its role in deubiquitinating NUMA1. Plays a role in interferon signaling via its role in the deubiquitination of the interferon receptor IFNAR1; deubiquitination increases IFNAR1 activity by enhancing its stability and cell surface expression. Acts as a regulator of the NLRP3 inflammasome by mediating deubiquitination of NLRP3, leading to NLRP3 inflammasome assembly. Down-regulates the response to bacterial lipopolysaccharide (LPS) via its role in IFNAR1 deubiquitination. Deubiquitinates HDAC1 and PWWP2B leading to their stabilization. The sequence is that of Lys-63-specific deubiquitinase BRCC36 (Brcc3) from Rattus norvegicus (Rat).